The primary structure comprises 432 residues: Alcohol acyltransferase 9 (432 aa).

Catalysis depends on proton acceptor residues His-156 and Asp-379.

It belongs to the plant acyltransferase family. In terms of tissue distribution, expressed in fruit.

It catalyses the reaction 2-(methylsulfanyl)acetyl-CoA + butan-1-ol = butyl 2-(methylsulfanyl)acetate + CoA. The enzyme catalyses ethanol + acetyl-CoA = ethyl acetate + CoA. It carries out the reaction butan-1-ol + acetyl-CoA = butyl acetate + CoA. The catalysed reaction is butan-1-ol + propanoyl-CoA = butyl propanoate + CoA. In terms of biological role, involved in the biosynthesis of volatile esters which confer kiwifruit flavor. Alcohol acyl transferase that can use a wide range of alcohols as substrate to produce esters. Exhibits acetyl-CoA:alcohol O-acyltransferase activity. The polypeptide is Alcohol acyltransferase 9 (Actinidia deliciosa (Kiwi)).